The following is a 345-amino-acid chain: MIKSDIASTVPIIAIDAMGGDVGLDTTLAAVLSVKNQYPALKLILVGNQSIIEKHSLFPQIASQMEIVHAEQIVAMDESPSSVLRHKNDSSMWRALELVQQGKADACVSAGNTGALMGCARFILKMLPNISRPAICSTVPNRYGHVHWLDLGANVSAKPEQLKQFAIMGSELSKAVDNIASPTVGLLNVGSEAIKGNDIVKEANTLISATDLNYVGYVEGNDLFLRKDLNVVVCDGFVGNVALKTVEGIAKFIQYGMEAEFKRSFFSRLTALVALPALKRLKKRIDPRMYNGATLLGLQGLVIKSHGNADPIAFANAINLARLEVENNVLHRICEQLQLNPEHDQ.

This sequence belongs to the PlsX family. In terms of assembly, homodimer. Probably interacts with PlsY.

It is found in the cytoplasm. The enzyme catalyses a fatty acyl-[ACP] + phosphate = an acyl phosphate + holo-[ACP]. It functions in the pathway lipid metabolism; phospholipid metabolism. Its function is as follows. Catalyzes the reversible formation of acyl-phosphate (acyl-PO(4)) from acyl-[acyl-carrier-protein] (acyl-ACP). This enzyme utilizes acyl-ACP as fatty acyl donor, but not acyl-CoA. This is Phosphate acyltransferase from Dichelobacter nodosus (strain VCS1703A).